Consider the following 147-residue polypeptide: 3-dehydroquinate dehydratase (147 aa).

The Proton acceptor role is filled by Tyr-24. 3 residues coordinate substrate: Asn-75, His-81, and Asp-88. His-101 (proton donor) is an active-site residue. Substrate-binding positions include 102 to 103 (IS) and Arg-112.

It belongs to the type-II 3-dehydroquinase family. As to quaternary structure, homododecamer.

The catalysed reaction is 3-dehydroquinate = 3-dehydroshikimate + H2O. It participates in metabolic intermediate biosynthesis; chorismate biosynthesis; chorismate from D-erythrose 4-phosphate and phosphoenolpyruvate: step 3/7. Catalyzes a trans-dehydration via an enolate intermediate. The chain is 3-dehydroquinate dehydratase from Cereibacter sphaeroides (strain ATCC 17023 / DSM 158 / JCM 6121 / CCUG 31486 / LMG 2827 / NBRC 12203 / NCIMB 8253 / ATH 2.4.1.) (Rhodobacter sphaeroides).